The chain runs to 363 residues: 5-hydroxytryptamine receptor 1E (363 aa).

The Extracellular portion of the chain corresponds to 1–21; that stretch reads MNITNCTTEASMAIRPKTITE. N2 and N5 each carry an N-linked (GlcNAc...) asparagine glycan. The helical transmembrane segment at 22-45 threads the bilayer; that stretch reads KMLICMTLVVITTLTTLLNLAVIM. Residues 46–59 are Cytoplasmic-facing; sequence AIGTTKKLHQPANY. Residues 60 to 84 traverse the membrane as a helical segment; it reads LICSLAVTDLLVAVLVMPLSIIYIV. Residues 85 to 92 are Extracellular-facing; it reads MDRWKLGY. The chain crosses the membrane as a helical span at residues 93–118; it reads FLCEVWLSVDMTCCTCSILHLCVIAL. A disulfide bridge connects residues C95 and C173. Serotonin-binding residues include D102 and C106. A DRY motif; important for ligand-induced conformation changes motif is present at residues 119–121; it reads DRY. Residues 119 to 138 lie on the Cytoplasmic side of the membrane; the sequence is DRYWAITNAIEYARKRTAKR. Residues 139–157 form a helical membrane-spanning segment; the sequence is AALMILTVWTISIFISMPP. Residues 158-179 lie on the Extracellular side of the membrane; that stretch reads LFWRSHRRLSPPPSQCTIQHDH. The helical transmembrane segment at 180–203 threads the bilayer; the sequence is VIYTIYSTLGAFYIPLTLILILYY. Residues 204 to 291 are Cytoplasmic-facing; that stretch reads RIYHAAKSLY…SSTRERKAAR (88 aa). Residues 292 to 316 traverse the membrane as a helical segment; the sequence is ILGLILGAFILSWLPFFIKELIVGL. Residues 317–322 are Extracellular-facing; that stretch reads SIYTVS. A helical membrane pass occupies residues 323-345; sequence SEVADFLTWLGYVNSLINPLLYT. An NPxxY motif; important for ligand-induced conformation changes and signaling motif is present at residues 340–344; sequence NPLLY. Over 346-363 the chain is Cytoplasmic; it reads SFNEDFKLAFKKLIRCRE.

The protein belongs to the G-protein coupled receptor 1 family.

The protein resides in the cell membrane. G-protein coupled receptor for 5-hydroxytryptamine (serotonin). Also functions as a receptor for various alkaloids and psychoactive substances. Ligand binding causes a conformation change that triggers signaling via guanine nucleotide-binding proteins (G proteins) and modulates the activity of downstream effectors, such as adenylate cyclase. HTR1E is coupled to G(i)/G(o) G alpha proteins and mediates inhibitory neurotransmission by inhibiting adenylate cyclase activity. The chain is 5-hydroxytryptamine receptor 1E (HTR1E) from Pan troglodytes (Chimpanzee).